The following is a 358-amino-acid chain: Small ribosomal subunit biogenesis GTPase RsgA (358 aa).

The 159-residue stretch at 76–234 (STEIDRPAVA…LADSPGFNQP (159 aa)) folds into the CP-type G domain. GTP is bound by residues 125–128 (NKID) and 176–184 (GPSGVGKSS). Zn(2+) contacts are provided by C259, C264, H266, and C272. Residues 319-358 (TYEPKLANKKYRRPSRRGKNQDQERYENKTLQDIYNDDSE) form a disordered region. Positions 325 to 336 (ANKKYRRPSRRG) are enriched in basic residues. A compositionally biased stretch (basic and acidic residues) spans 337 to 348 (KNQDQERYENKT).

It belongs to the TRAFAC class YlqF/YawG GTPase family. RsgA subfamily. As to quaternary structure, monomer. Associates with 30S ribosomal subunit, binds 16S rRNA. The cofactor is Zn(2+).

It is found in the cytoplasm. Functionally, one of several proteins that assist in the late maturation steps of the functional core of the 30S ribosomal subunit. Helps release RbfA from mature subunits. May play a role in the assembly of ribosomal proteins into the subunit. Circularly permuted GTPase that catalyzes slow GTP hydrolysis, GTPase activity is stimulated by the 30S ribosomal subunit. In Microcystis aeruginosa (strain NIES-843 / IAM M-2473), this protein is Small ribosomal subunit biogenesis GTPase RsgA.